A 271-amino-acid chain; its full sequence is Phosphate import ATP-binding protein PstB (271 aa).

The region spanning M24 to I266 is the ABC transporter domain. Residue G56–S63 coordinates ATP.

This sequence belongs to the ABC transporter superfamily. Phosphate importer (TC 3.A.1.7) family. The complex is composed of two ATP-binding proteins (PstB), two transmembrane proteins (PstC and PstA) and a solute-binding protein (PstS).

The protein localises to the cell inner membrane. It catalyses the reaction phosphate(out) + ATP + H2O = ADP + 2 phosphate(in) + H(+). In terms of biological role, part of the ABC transporter complex PstSACB involved in phosphate import. Responsible for energy coupling to the transport system. This is Phosphate import ATP-binding protein PstB from Rhizobium etli (strain ATCC 51251 / DSM 11541 / JCM 21823 / NBRC 15573 / CFN 42).